The primary structure comprises 500 residues: Putative glucokinase-2 (500 aa).

An N-acetylserine modification is found at S2. S2 carries the phosphoserine modification. One can recognise a Hexokinase domain in the interval 12 to 498; that stretch reads EALEDAVVEI…SGVGAALCAL (487 aa). Positions 74–217 are hexokinase small subdomain; that stretch reads NGTERGVLLA…LSMINVVALT (144 aa). K110 contributes to the ATP binding site. Residues 159–185 form a glucose-binding region; sequence KMGFTFSYPVDQTSLSSGTLIRWTKSF. A hexokinase large subdomain region spans residues 218–487; sequence NDTVGTFLSH…RKIHLRLAKD (270 aa). At S470 the chain carries Phosphoserine. ATP is bound at residue 487-492; it reads DGSGVG.

It belongs to the hexokinase family.

Its subcellular location is the cytoplasm. It catalyses the reaction D-glucose + ATP = D-glucose 6-phosphate + ADP + H(+). The protein operates within carbohydrate degradation; glycolysis; D-glyceraldehyde 3-phosphate and glycerone phosphate from D-glucose: step 1/4. In terms of biological role, putative glucokinase involved in phosphorylation of aldohexoses and glucose uptake. Involved in sporulation. Required for the full activation of the early meiotic inducer IME1. In Saccharomyces cerevisiae (strain ATCC 204508 / S288c) (Baker's yeast), this protein is Putative glucokinase-2 (EMI2).